The chain runs to 219 residues: Histone H1.01 (219 aa).

Composition is skewed to low complexity over residues 1 to 19 and 27 to 39; these read MSET…GAKA and AAGG…PAGP. Disordered regions lie at residues 1–40 and 94–219; these read MSET…AGPS and LVQT…AKKK. S2 bears the N-acetylserine mark. The region spanning 37 to 110 is the H15 domain; the sequence is AGPSVTELIT…GASGSFRLNK (74 aa). Basic residues-rich tracts occupy residues 119–134, 142–159, 167–185, and 192–219; these read APRK…KPAA, KKPK…KAKK, KAAK…KKAA, and KAVK…AKKK.

It belongs to the histone H1/H5 family.

Its subcellular location is the nucleus. The protein resides in the chromosome. In terms of biological role, histones H1 are necessary for the condensation of nucleosome chains into higher-order structures. This Gallus gallus (Chicken) protein is Histone H1.01.